The sequence spans 217 residues: Large ribosomal subunit protein uL3 (217 aa).

Residues 131 to 155 form a disordered region; sequence FSSSRASHGNSRSHNVPGSIGMAQD. Low complexity predominate over residues 132-145; the sequence is SSSRASHGNSRSHN. The residue at position 154 (Q154) is an N5-methylglutamine.

Belongs to the universal ribosomal protein uL3 family. As to quaternary structure, part of the 50S ribosomal subunit. Forms a cluster with proteins L14 and L19. In terms of processing, methylated by PrmB.

Functionally, one of the primary rRNA binding proteins, it binds directly near the 3'-end of the 23S rRNA, where it nucleates assembly of the 50S subunit. This Nitrosomonas eutropha (strain DSM 101675 / C91 / Nm57) protein is Large ribosomal subunit protein uL3.